The primary structure comprises 199 residues: Twist-related protein 1 (199 aa).

Over residues 1–18 (MMQDVSSSPVSPADDSLS) the composition is skewed to low complexity. The disordered stretch occupies residues 1-102 (MMQDVSSSPV…GGGSPQSYEE (102 aa)). Residues 34–43 (RGGRKRRSSR) are compositionally biased toward basic residues. Gly residues-rich tracts occupy residues 46-65 (AGGG…GGDE) and 80-96 (GCGG…GGGS). The region spanning 105–156 (TQRVMANVRERQRTQSLNEAFAALRKIIPTLPSDKLSKIQTLKLAARYIDFL) is the bHLH domain. The tract at residues 158–188 (QVLQSDELDSKMASCSYVAHERLSYAFSVWR) is sufficient for transactivation activity.

In terms of assembly, efficient DNA binding requires dimerization with another bHLH protein. Homodimer or heterodimer with E proteins such as TCF3. ID1 binds preferentially to TCF3 but does not interact efficiently with TWIST1 so ID1 levels control the amount of TCF3 available to dimerize with TWIST and thus determine the type of dimer formed.

The protein resides in the nucleus. Functionally, acts as a transcriptional regulator. Inhibits myogenesis by sequestrating E proteins, inhibiting trans-activation by MEF2, and inhibiting DNA-binding by MYOD1 through physical interaction. This interaction probably involves the basic domains of both proteins. Also represses expression of pro-inflammatory cytokines such as TNFA and IL1B. Regulates cranial suture patterning and fusion. Activates transcription as a heterodimer with E proteins. Regulates gene expression differentially, depending on dimer composition. Homodimers induce expression of FGFR2 and POSTN while heterodimers repress FGFR2 and POSTN expression and induce THBS1 expression. Heterodimerization is also required for osteoblast differentiation. Represses the activity of the circadian transcriptional activator: NPAS2-BMAL1 heterodimer. This is Twist-related protein 1 (TWIST1) from Microcebus murinus (Gray mouse lemur).